Consider the following 553-residue polypeptide: Glutamine--tRNA ligase (553 aa).

Positions 34 to 44 match the 'HIGH' region motif; the sequence is PEPNGYLHIGH. Residues 35-37 and 41-47 each bind ATP; these read EPN and HIGHAKS. The L-glutamine site is built by Asp-68 and Tyr-213. Residues Thr-232 and 262–263 contribute to the ATP site; that span reads RL. The 'KMSKS' region signature appears at 269–273; it reads LTSKR.

It belongs to the class-I aminoacyl-tRNA synthetase family. In terms of assembly, monomer.

It is found in the cytoplasm. The catalysed reaction is tRNA(Gln) + L-glutamine + ATP = L-glutaminyl-tRNA(Gln) + AMP + diphosphate. In Psychromonas ingrahamii (strain DSM 17664 / CCUG 51855 / 37), this protein is Glutamine--tRNA ligase.